A 254-amino-acid polypeptide reads, in one-letter code: (2Z,6E)-farnesyl diphosphate synthase (254 aa).

Aspartate 34 is a catalytic residue. Residue aspartate 34 participates in Mg(2+) binding. Substrate-binding positions include 35-38 (GNRR), tryptophan 39, histidine 52, and 80-82 (STD). The active-site Proton acceptor is the asparagine 83. Substrate-binding positions include arginine 86, arginine 203, and 209–211 (RLS). Glutamate 222 serves as a coordination point for Mg(2+).

It belongs to the UPP synthase family. Z-FPP synthase subfamily. As to quaternary structure, homodimer. The cofactor is Mg(2+).

It carries out the reaction isopentenyl diphosphate + (2E)-geranyl diphosphate = (2Z,6E)-farnesyl diphosphate + diphosphate. Catalyzes the condensation of only one isopentenyl pyrophosphate (IPP) unit in the cis configuration to E-geranyl diphosphate (E-GPP) generating the 15 carbon product (2Z,6E)-farnesyl diphosphate (Z-FPP or EZ-FPP). Only geranyl diphosphate (GPP) can be used as isoprenyl acceptor. The chain is (2Z,6E)-farnesyl diphosphate synthase from Thermobifida fusca (strain YX).